The sequence spans 308 residues: Inosose dehydratase (308 aa).

It belongs to the IolE/MocC family. It depends on glutathione as a cofactor. Co(2+) serves as cofactor. The cofactor is Mn(2+).

It catalyses the reaction scyllo-inosose = 3D-3,5/4-trihydroxycyclohexane-1,2-dione + H2O. The protein operates within polyol metabolism; myo-inositol degradation into acetyl-CoA; acetyl-CoA from myo-inositol: step 2/7. Catalyzes the dehydration of inosose (2-keto-myo-inositol, 2KMI or 2,4,6/3,5-pentahydroxycyclohexanone) to 3D-(3,5/4)-trihydroxycyclohexane-1,2-dione (D-2,3-diketo-4-deoxy-epi-inositol). In Geobacillus kaustophilus (strain HTA426), this protein is Inosose dehydratase.